The chain runs to 356 residues: Protein pelota homolog (356 aa).

It belongs to the eukaryotic release factor 1 family. Pelota subfamily. In terms of assembly, monomer. It depends on a divalent metal cation as a cofactor.

It is found in the cytoplasm. Functionally, may function in recognizing stalled ribosomes, interact with stem-loop structures in stalled mRNA molecules, and effect endonucleolytic cleavage of the mRNA. May play a role in the release non-functional ribosomes and degradation of damaged mRNAs. Has endoribonuclease activity. The polypeptide is Protein pelota homolog (Aeropyrum pernix (strain ATCC 700893 / DSM 11879 / JCM 9820 / NBRC 100138 / K1)).